A 107-amino-acid polypeptide reads, in one-letter code: Serine-rich and transmembrane domain-containing protein 1 (107 aa).

The chain crosses the membrane as a helical span at residues 43-63; it reads IYVSIFLSLLAFLLLLLIIAL.

It is found in the membrane. This chain is Serine-rich and transmembrane domain-containing protein 1 (SERTM1), found in Homo sapiens (Human).